We begin with the raw amino-acid sequence, 327 residues long: Phenylalanine--tRNA ligase alpha subunit (327 aa).

Glu-252 serves as a coordination point for Mg(2+).

It belongs to the class-II aminoacyl-tRNA synthetase family. Phe-tRNA synthetase alpha subunit type 1 subfamily. In terms of assembly, tetramer of two alpha and two beta subunits. Requires Mg(2+) as cofactor.

It is found in the cytoplasm. It carries out the reaction tRNA(Phe) + L-phenylalanine + ATP = L-phenylalanyl-tRNA(Phe) + AMP + diphosphate + H(+). This Shewanella denitrificans (strain OS217 / ATCC BAA-1090 / DSM 15013) protein is Phenylalanine--tRNA ligase alpha subunit.